The primary structure comprises 690 residues: Subtilisin-like protease 1 (690 aa).

Residues M1–G25 form the signal peptide. Positions K26–D219 are cleaved as a propeptide — inhibition peptide. The interval E99–E131 is disordered. The segment covering H106–N124 has biased composition (low complexity). An N-linked (GlcNAc...) asparagine glycan is attached at N114. Ca(2+) is bound by residues N147, T150, and P152. N-linked (GlcNAc...) asparagine glycosylation occurs at N173. Position 207 (G207) interacts with Ca(2+). N263 carries N-linked (GlcNAc...) asparagine glycosylation. Disordered stretches follow at residues H266–S286 and N305–K334. Residues N305–S330 are compositionally biased toward low complexity. Residues N319 and N324 are each glycosylated (N-linked (GlcNAc...) asparagine). Residue E340 coordinates Ca(2+). Positions Q345 to V663 constitute a Peptidase S8 domain. Intrachain disulfides connect C371/C481 and C460/C477. The active-site Charge relay system is D374. D383, E394, R398, F401, D402, D403, D404, N406, I408, D410, and D411 together coordinate Ca(2+). An N-linked (GlcNAc...) asparagine glycan is attached at N419. Residue H430 is the Charge relay system of the active site. Residues I441, N444, I446, and V448 each coordinate Ca(2+). N-linked (GlcNAc...) asparagine glycans are attached at residues N490, N503, and N522. C523 and C536 are disulfide-bonded. N-linked (GlcNAc...) asparagine glycosylation is present at N605. S608 acts as the Charge relay system in catalysis. Residue N677 is glycosylated (N-linked (GlcNAc...) asparagine).

It belongs to the peptidase S8 family. As to quaternary structure, heterodimer between p54 form and prodomain p31; the interaction inhibits p54 catalytic activity. Heterodimer p31-p54 is monomeric at basic pH and dimeric at acidic pH; dimerization is driven by the N-terminal prodomain (p31). It depends on Ca(2+) as a cofactor. The prodomain (p31) is cleaved, probably by autocatalysis, during the transport to or in the Golgi apparatus, and remains non-covalently associated with the p54 form as an inhibitor. p54 is further cleaved into the p47 form. This cleavage is likely occurring in the exoneme prior to egress and is mediated by PMX/plasmepsin X. The p54-to-p47 conversion can be also autocatalytic. Heterodimer p31-p54 is activated by cleavage of prodomain (p31) by the aspartic protease PMX; cleavage by PMX abolishes inhibitory capacity of p31. Primary autocatalytic processing of SUB1 is essential for parasite growth; the p54-to-p47 conversion is dispensable for SUB1 functions in the parasites. In terms of processing, the disulfide bond between Cys-523 and Cys-536 acts as a redox-sensitive disulfide switch. The oxidized form is required for catalytic activity. Post-translationally, the relevance of N-glycosylation is not clear. In an insect expression system, SUB1 glycosylation appears to affect its processing into the active mature form suggesting that SUB1 may not be N-glycosylated in parasites.

It localises to the secreted. Its subcellular location is the parasitophorous vacuole lumen. The enzyme catalyses Hydrolysis of proteins with broad specificity for peptide bonds, and a preference for a large uncharged residue in P1. Hydrolyzes peptide amides.. P54 and probably p47 forms are inhibited by the non-covalent interaction with the cleaved propeptide. Inhibited by subtilisin propeptide-like protein SUB1-ProM. Inhibited by 3,4-dichloroisocoumarin (DCI) and 4-(hydroxymercuri)benzoic acid (pHMB). Partially inhibited by chymostatin, leupeptin, phenylmethylsulfonyl fluoride (PMSF), and 4-(2-aminoethyl)benzenesulfonyl fluoride. Functionally, serine protease which plays an essential role in merozoite invasion of and egress from host erythrocytes by processing and activating various merozoite surface and parasitophorous vacuole proteins. Mediates the proteolytic maturation of serine proteases SERA4, SERA5 and SERA6 just prior to merozoite egress. Prior to merozoite egress, cleaves merozoite surface proteins MSP1, MSP6 and MSP7, which form the MSP1/6/7 complex, and thereby may prime the parasite cell surface for invasion of fresh erythrocytes. Prior to merozoite egress, cleaves MSRP2 converting it to MSRP2 p25 form, and RAP1 converting it to RAP1 p67 form. This chain is Subtilisin-like protease 1, found in Plasmodium falciparum.